The following is a 384-amino-acid chain: Putative glutamate--cysteine ligase 2-1 (384 aa).

Belongs to the glutamate--cysteine ligase type 2 family. YbdK subfamily.

The enzyme catalyses L-cysteine + L-glutamate + ATP = gamma-L-glutamyl-L-cysteine + ADP + phosphate + H(+). ATP-dependent carboxylate-amine ligase which exhibits weak glutamate--cysteine ligase activity. The sequence is that of Putative glutamate--cysteine ligase 2-1 from Paenarthrobacter aurescens (strain TC1).